Consider the following 134-residue polypeptide: uncharacterized protein (134 aa).

This is an uncharacterized protein from Saccharomyces cerevisiae (strain ATCC 204508 / S288c) (Baker's yeast).